Reading from the N-terminus, the 339-residue chain is UDP-N-acetylglucosamine--N-acetylmuramyl-(pentapeptide) pyrophosphoryl-undecaprenol N-acetylglucosamine transferase (339 aa).

UDP-N-acetyl-alpha-D-glucosamine-binding positions include 11-13, asparagine 127, arginine 170, serine 188, isoleucine 235, and glutamine 280; that span reads TGG.

It belongs to the glycosyltransferase 28 family. MurG subfamily.

Its subcellular location is the cell inner membrane. It catalyses the reaction di-trans,octa-cis-undecaprenyl diphospho-N-acetyl-alpha-D-muramoyl-L-alanyl-D-glutamyl-meso-2,6-diaminopimeloyl-D-alanyl-D-alanine + UDP-N-acetyl-alpha-D-glucosamine = di-trans,octa-cis-undecaprenyl diphospho-[N-acetyl-alpha-D-glucosaminyl-(1-&gt;4)]-N-acetyl-alpha-D-muramoyl-L-alanyl-D-glutamyl-meso-2,6-diaminopimeloyl-D-alanyl-D-alanine + UDP + H(+). Its pathway is cell wall biogenesis; peptidoglycan biosynthesis. In terms of biological role, cell wall formation. Catalyzes the transfer of a GlcNAc subunit on undecaprenyl-pyrophosphoryl-MurNAc-pentapeptide (lipid intermediate I) to form undecaprenyl-pyrophosphoryl-MurNAc-(pentapeptide)GlcNAc (lipid intermediate II). The sequence is that of UDP-N-acetylglucosamine--N-acetylmuramyl-(pentapeptide) pyrophosphoryl-undecaprenol N-acetylglucosamine transferase from Thermotoga neapolitana (strain ATCC 49049 / DSM 4359 / NBRC 107923 / NS-E).